A 366-amino-acid chain; its full sequence is Transmembrane protein 26 (366 aa).

A run of 3 helical transmembrane segments spans residues Leu4–Val24, Tyr36–Phe56, and Trp64–Glu84. The N-linked (GlcNAc...) asparagine glycan is linked to Asn110. The next 5 helical transmembrane spans lie at Met138–Ile158, Glu176–Leu196, Val208–Val228, Ile258–Ile278, and Val282–Phe302. Residues His319–Gly329 show a composition bias toward basic and acidic residues. The tract at residues His319–Pro366 is disordered. Residues Ser354 to Pro366 show a composition bias toward polar residues.

The protein localises to the membrane. The protein is Transmembrane protein 26 (Tmem26) of Mus musculus (Mouse).